The sequence spans 716 residues: FLYWCH-type zinc finger-containing protein 1 (716 aa).

The tract at residues 1–35 is disordered; that stretch reads MPLPEPSEQEGESVKAGQEPSPKPGTDVIPAAPRK. Serine 21 carries the post-translational modification Phosphoserine. Residues 116–174 form an FLYWCH-type 1 zinc finger; sequence FLRTPFGGRLLVLESFLYKQEKAVGDKVYWKCRQHAELGCRGRAITRGLRATVMRGHCH. Lysine 134 is covalently cross-linked (Glycyl lysine isopeptide (Lys-Gly) (interchain with G-Cter in SUMO2)). The tract at residues 191-231 is disordered; the sequence is PSLALPEGLGEPQGPEGPGGRVEEPLEGVGPWQCPEEPEPT. A compositionally biased stretch (low complexity) spans 195–204; sequence LPEGLGEPQG. Serine 261 carries the phosphoserine modification. The FLYWCH-type 2 zinc finger occupies 273 to 331; sequence FLRTCYGGSFLVHESFLYKREKAVGDKVYWTCRDHALHGCRSRAITQGQRVTVMRGHCH. Serine 371 is modified (phosphoserine). The tract at residues 377-421 is disordered; that stretch reads GPGPLTLTRPRPRKRAKVEDQELPTQPEAPDEHQDMDADPGGPEF. Lysine 393 participates in a covalent cross-link: Glycyl lysine isopeptide (Lys-Gly) (interchain with G-Cter in SUMO2). The segment at 421-479 adopts an FLYWCH-type 3 zinc-finger fold; it reads FLKTPLGGSFLVYESFLYRREKAAGEKVYWTCRDQARMGCRSRAITQGRRVTVMRGHCH. At serine 503 the chain carries Phosphoserine. The FLYWCH-type 4 zinc finger occupies 509 to 567; sequence FLKTPLGGSFLVYESFLYRREKAAGEKVYWTCRDQARMGCRSRAITQGRRVMVMRRHCH. Serine 591 carries the phosphoserine modification. The FLYWCH-type 5 zinc-finger motif lies at 600 to 658; sequence FLRTSLGGRFLVHESFLYRKEKAAGEKVYWMCRDQARLGCRSRAITQGHRIMVMRSHCH. Residue lysine 685 forms a Glycyl lysine isopeptide (Lys-Gly) (interchain with G-Cter in SUMO2) linkage. Serine 696 carries the post-translational modification Phosphoserine.

In terms of assembly, interacts with CTNNB1 (when unphosphorylated), perhaps preventing interaction of CTNNB1 with TCF4, and thereby regulating transcription activation; phosphorylation of CTNNB1 may inhibit the interaction.

Its subcellular location is the nucleus. It is found in the chromosome. The protein localises to the centromere. Functionally, transcription cofactor. Negatively regulates transcription activation by catenin beta-1 CTNNB1, perhaps acting by competing with TCF4 for CTNNB1 binding. May play a role in DNA-damage response signaling. Binds specifically to DNA sequences at peri-centromeric chromatin loci. The polypeptide is FLYWCH-type zinc finger-containing protein 1 (FLYWCH1) (Homo sapiens (Human)).